Here is a 99-residue protein sequence, read N- to C-terminus: DNA-directed RNA polymerase subunit omega (99 aa).

The protein belongs to the RNA polymerase subunit omega family. In terms of assembly, the RNAP catalytic core consists of 2 alpha, 1 beta, 1 beta' and 1 omega subunit. When a sigma factor is associated with the core the holoenzyme is formed, which can initiate transcription.

It carries out the reaction RNA(n) + a ribonucleoside 5'-triphosphate = RNA(n+1) + diphosphate. Its function is as follows. Promotes RNA polymerase assembly. Latches the N- and C-terminal regions of the beta' subunit thereby facilitating its interaction with the beta and alpha subunits. This chain is DNA-directed RNA polymerase subunit omega, found in Stenotrophomonas maltophilia (strain K279a).